We begin with the raw amino-acid sequence, 186 residues long: Nucleoside diphosphate kinase 6 (186 aa).

The ATP site is built by lysine 19, phenylalanine 68, arginine 96, threonine 102, arginine 116, and asparagine 126. Histidine 129 functions as the Pros-phosphohistidine intermediate in the catalytic mechanism.

The protein belongs to the NDK family. Requires Mg(2+) as cofactor. Expressed at a moderately low level in many tissues. Most abundant in kidney, prostate, ovary, intestine, and spleen.

It catalyses the reaction a 2'-deoxyribonucleoside 5'-diphosphate + ATP = a 2'-deoxyribonucleoside 5'-triphosphate + ADP. The enzyme catalyses a ribonucleoside 5'-diphosphate + ATP = a ribonucleoside 5'-triphosphate + ADP. Its function is as follows. Major role in the synthesis of nucleoside triphosphates other than ATP. The ATP gamma phosphate is transferred to the NDP beta phosphate via a ping-pong mechanism, using a phosphorylated active-site intermediate. Inhibitor of p53-induced apoptosis. The chain is Nucleoside diphosphate kinase 6 (NME6) from Homo sapiens (Human).